The sequence spans 377 residues: Histidinol-phosphate aminotransferase 2 (377 aa).

The tract at residues Asn-17–Pro-44 is disordered. N6-(pyridoxal phosphate)lysine is present on Lys-228.

Belongs to the class-II pyridoxal-phosphate-dependent aminotransferase family. Histidinol-phosphate aminotransferase subfamily. As to quaternary structure, homodimer. Pyridoxal 5'-phosphate serves as cofactor.

It carries out the reaction L-histidinol phosphate + 2-oxoglutarate = 3-(imidazol-4-yl)-2-oxopropyl phosphate + L-glutamate. Its pathway is amino-acid biosynthesis; L-histidine biosynthesis; L-histidine from 5-phospho-alpha-D-ribose 1-diphosphate: step 7/9. The protein is Histidinol-phosphate aminotransferase 2 of Psychrobacter arcticus (strain DSM 17307 / VKM B-2377 / 273-4).